The chain runs to 452 residues: Acetyl-CoA decarbonylase/synthase complex subunit delta (452 aa).

Belongs to the CdhD family. In terms of assembly, heterodimer of delta and gamma chains. The ACDS complex is made up of alpha, epsilon, beta, gamma and delta chains with a probable stoichiometry of (alpha(2)epsilon(2))(4)-beta(8)-(gamma(1)delta(1))(8).

Its function is as follows. Part of a complex that catalyzes the reversible cleavage of acetyl-CoA, allowing autotrophic growth from CO(2). Probably maintains the overall quaternary structure of the ACDS complex. The protein is Acetyl-CoA decarbonylase/synthase complex subunit delta of Archaeoglobus fulgidus (strain ATCC 49558 / DSM 4304 / JCM 9628 / NBRC 100126 / VC-16).